We begin with the raw amino-acid sequence, 399 residues long: Delta(12) acyl-lipid conjugase (11E,13E-forming) (399 aa).

The disordered stretch occupies residues 11-30 (RNGGGPKKKMGPGQGLGPGE). The next 2 membrane-spanning stretches (helical) occupy residues 61–81 (FSYL…ADTY) and 93–113 (LAWP…WGIA). The Histidine box-1 motif lies at 114–118 (HDCGH). Residues 126 to 146 (LVDDVVGFLIHSLVFVPYFSF) form a helical membrane-spanning segment. Residues 150 to 154 (HRRHH) carry the Histidine box-2 motif. Helical transmembrane passes span 188-208 (VFII…FNIS), 232-252 (VLVH…YRIA), and 258-278 (GWLI…VVLI). A Histidine box-3 motif is present at residues 325-329 (HVVHH).

Belongs to the fatty acid desaturase type 1 family. Expressed in developing seeds, but not in leaves.

It localises to the membrane. The enzyme catalyses a (9Z,12Z)-octadecadienoyl-containing glycerolipid + 2 Fe(II)-[cytochrome b5] + O2 + 2 H(+) = a (9Z,11E,13E)-octadecatrienoyl-containing glycerolipid + 2 Fe(III)-[cytochrome b5] + 2 H2O. It carries out the reaction (9Z,12Z,15Z)-octadecatrienoyl-containing glycerolipid + 2 Fe(II)-[cytochrome b5] + O2 + 2 H(+) = a (9Z,11E,13E,15Z)-octadecatetraenoyl-containing glycerolipid + 2 Fe(III)-[cytochrome b5] + 2 H2O. The protein operates within lipid metabolism; polyunsaturated fatty acid biosynthesis. Functionally, converts linoleic acid to alpha-eleostearic acid (18:3(9Z,11E,13E)) and alpha-linolenic acid to alpha-parinaric acid (18:4(9Z,11E, 13E, 15Z)). Converts a single cis double bond at carbon 12 to two conjugated trans bonds at positions 11 and 13. The polypeptide is Delta(12) acyl-lipid conjugase (11E,13E-forming) (Momordica charantia (Bitter gourd)).